The primary structure comprises 150 residues: Deoxyuridine 5'-triphosphate nucleotidohydrolase (150 aa).

Residues Arg69 to Gly71, Asn82, and Leu86 to Asp88 contribute to the substrate site.

This sequence belongs to the dUTPase family. It depends on Mg(2+) as a cofactor.

The enzyme catalyses dUTP + H2O = dUMP + diphosphate + H(+). It functions in the pathway pyrimidine metabolism; dUMP biosynthesis; dUMP from dCTP (dUTP route): step 2/2. In terms of biological role, this enzyme is involved in nucleotide metabolism: it produces dUMP, the immediate precursor of thymidine nucleotides and it decreases the intracellular concentration of dUTP so that uracil cannot be incorporated into DNA. The polypeptide is Deoxyuridine 5'-triphosphate nucleotidohydrolase (Methylobacillus flagellatus (strain ATCC 51484 / DSM 6875 / VKM B-1610 / KT)).